Reading from the N-terminus, the 314-residue chain is MAEFKHITVLLNEAVDGLNIKPDGTYVDCTLGGGGHSGLILSKLSENGKLYSFDQDITAINFNKDKFEEENELGKINFIKSNFRNISEELNKRNILGVDGILYDLGVSSPQFDNADRGFSYNYDAPLDMRMDQSQSLTARDVVNDWSYEQLVRIFFRYGEEKFAKSIARRIEKVRQQTPIETTGQLVDLIKEAIPAKARRKGGHPAKKTFQAIRIAVNDELGALEESLEQALDLLNPGGRISVITFQSLEDRLVKVMFKQKTSLPELPPGLPVIPDSQKVEYKLITRKPIVPSEDEITHNNRAHSAKLRIIEKL.

S-adenosyl-L-methionine is bound by residues 34 to 36 (GGH), aspartate 54, phenylalanine 83, aspartate 104, and glutamine 111.

The protein belongs to the methyltransferase superfamily. RsmH family.

Its subcellular location is the cytoplasm. It carries out the reaction cytidine(1402) in 16S rRNA + S-adenosyl-L-methionine = N(4)-methylcytidine(1402) in 16S rRNA + S-adenosyl-L-homocysteine + H(+). Its function is as follows. Specifically methylates the N4 position of cytidine in position 1402 (C1402) of 16S rRNA. This is Ribosomal RNA small subunit methyltransferase H from Ligilactobacillus salivarius (strain UCC118) (Lactobacillus salivarius).